The following is a 246-amino-acid chain: Probable transcriptional regulatory protein BVU_3469 (246 aa).

Belongs to the TACO1 family.

The protein resides in the cytoplasm. This is Probable transcriptional regulatory protein BVU_3469 from Phocaeicola vulgatus (strain ATCC 8482 / DSM 1447 / JCM 5826 / CCUG 4940 / NBRC 14291 / NCTC 11154) (Bacteroides vulgatus).